The following is a 207-amino-acid chain: uncharacterized protein (207 aa).

A helical transmembrane segment spans residues 177 to 197 (LILAIGFIIGILLPTFFILLG).

Its subcellular location is the membrane. This is an uncharacterized protein from Haemophilus influenzae (strain ATCC 51907 / DSM 11121 / KW20 / Rd).